Here is a 260-residue protein sequence, read N- to C-terminus: 3'-5' ssDNA/RNA exonuclease TatD (260 aa).

A divalent metal cation-binding residues include glutamate 92, histidine 128, and histidine 153.

This sequence belongs to the metallo-dependent hydrolases superfamily. TatD-type hydrolase family. TatD subfamily. Monomer. Mg(2+) is required as a cofactor.

It is found in the cytoplasm. 3'-5' exonuclease that prefers single-stranded DNA and RNA. May play a role in the H(2)O(2)-induced DNA damage repair. In Pantoea sp. (strain At-9b), this protein is 3'-5' ssDNA/RNA exonuclease TatD.